Here is an 81-residue protein sequence, read N- to C-terminus: Sulfur carrier protein TusA (81 aa).

Cysteine 19 (cysteine persulfide intermediate) is an active-site residue.

It belongs to the sulfur carrier protein TusA family.

The protein localises to the cytoplasm. In terms of biological role, sulfur carrier protein which probably makes part of a sulfur-relay system. The chain is Sulfur carrier protein TusA from Shewanella piezotolerans (strain WP3 / JCM 13877).